Here is a 317-residue protein sequence, read N- to C-terminus: Aspartate carbamoyltransferase catalytic subunit (317 aa).

Arg64 and Thr65 together coordinate carbamoyl phosphate. Residue Lys92 participates in L-aspartate binding. Carbamoyl phosphate contacts are provided by Arg114, His142, and Gln145. Arg176 and Arg230 together coordinate L-aspartate. Carbamoyl phosphate contacts are provided by Gly271 and Pro272.

The protein belongs to the aspartate/ornithine carbamoyltransferase superfamily. ATCase family. In terms of assembly, heterododecamer (2C3:3R2) of six catalytic PyrB chains organized as two trimers (C3), and six regulatory PyrI chains organized as three dimers (R2).

The enzyme catalyses carbamoyl phosphate + L-aspartate = N-carbamoyl-L-aspartate + phosphate + H(+). Its pathway is pyrimidine metabolism; UMP biosynthesis via de novo pathway; (S)-dihydroorotate from bicarbonate: step 2/3. Catalyzes the condensation of carbamoyl phosphate and aspartate to form carbamoyl aspartate and inorganic phosphate, the committed step in the de novo pyrimidine nucleotide biosynthesis pathway. The sequence is that of Aspartate carbamoyltransferase catalytic subunit from Nitratidesulfovibrio vulgaris (strain ATCC 29579 / DSM 644 / CCUG 34227 / NCIMB 8303 / VKM B-1760 / Hildenborough) (Desulfovibrio vulgaris).